Reading from the N-terminus, the 663-residue chain is Zyxin (663 aa).

The tract at residues 35–438 (PPKPKINPFK…QQDQTLGSQG (404 aa)) is disordered. Pro residues-rich tracts occupy residues 122-148 (FPPP…PPPL) and 160-211 (VPVP…PPSV). Polar residues predominate over residues 298 to 314 (PQKTTEPPAEASQSSPK). Basic and acidic residues-rich tracts occupy residues 342–353 (QRERPRVLEKPR) and 360–375 (EPEH…ERTR). 2 stretches are compositionally biased toward polar residues: residues 377-393 (LGPQ…QSTG) and 427-438 (TGQQDQTLGSQG). LIM zinc-binding domains lie at 470-531 (ELCG…TLEC), 532-589 (CAVC…RRYA), and 590-660 (PRCC…RARA).

Belongs to the zyxin/ajuba family. As to quaternary structure, interacts (via LIM2 domain) with hesx1/anf1. As to expression, at the early gastrula stage, expressed at a low level in the animal hemisphere. Expression rises by the end of gastrulation in the anterior part of the embryo, where it gradually increases by the midneurula stage. During neurulation, expression continues most intensively in the anterior part of the neural plate and around it. At later stages, intensely expressed in the brain and at lower levels in the spinal cord, eyes, nasal placodes, within somites, and around the cement gland.

The protein resides in the cytoplasm. It localises to the cytoskeleton. The protein localises to the cell junction. Its subcellular location is the focal adhesion. Adhesion plaque protein. May be a component of a signal transduction pathway that mediates adhesion-stimulated changes in gene expression. Suppresses the transcription-repressing activity of hesx1/anf1. This Xenopus laevis (African clawed frog) protein is Zyxin.